The following is a 195-amino-acid chain: Imidazoleglycerol-phosphate dehydratase (195 aa).

Belongs to the imidazoleglycerol-phosphate dehydratase family.

It localises to the cytoplasm. It catalyses the reaction D-erythro-1-(imidazol-4-yl)glycerol 3-phosphate = 3-(imidazol-4-yl)-2-oxopropyl phosphate + H2O. It participates in amino-acid biosynthesis; L-histidine biosynthesis; L-histidine from 5-phospho-alpha-D-ribose 1-diphosphate: step 6/9. This chain is Imidazoleglycerol-phosphate dehydratase, found in Burkholderia vietnamiensis (strain G4 / LMG 22486) (Burkholderia cepacia (strain R1808)).